Consider the following 618-residue polypeptide: Glutathione-regulated potassium-efflux system protein (618 aa).

12 helical membrane-spanning segments follow: residues 6 to 26, 32 to 52, 55 to 75, 94 to 114, 118 to 138, 152 to 172, 186 to 206, 227 to 247, 274 to 294, 298 to 318, 336 to 356, and 362 to 382; these read NPELMKVVILLASSVTIVPLF, GSVLGYLVAGCLIGPSVFGIV, PTAVVHLAELGVVMFLFIIGL, LLQVGLCGCLLTFSGIYLLGL, VSFIAGMGFTLSSTAIVMQSL, VISTLIFEDIAIVPLLASVAF, WVSIGIALSAVVGLIVTGKWL, ALLVVLGAALAMEIGGLSMAM, GLLLGLFFMGVGMSLDLHLVF, ILLLGIVFLYILGKASAVYII, MAHGGEFAFVLFSAAATAEVI, and ATFTAAVIISMLFSPIIAQIA. The RCK N-terminal domain occupies 409 to 525; sequence EDNVLVIGFG…LIKQDVDFIV (117 aa).

It belongs to the monovalent cation:proton antiporter 2 (CPA2) transporter (TC 2.A.37) family.

The protein localises to the cell inner membrane. Transport system that facilitate potassium-efflux, possibly by potassium-proton antiport. The protein is Glutathione-regulated potassium-efflux system protein (kefBC) of Haemophilus influenzae (strain ATCC 51907 / DSM 11121 / KW20 / Rd).